The chain runs to 236 residues: Purine nucleoside phosphorylase DeoD-type (236 aa).

Histidine 5 contacts a purine D-ribonucleoside. Phosphate is bound by residues glycine 21, arginine 25, arginine 44, and 88–91; that span reads RIGS. Residues 180–182 and 204–205 contribute to the a purine D-ribonucleoside site; these read EME and SD. The active-site Proton donor is aspartate 205.

This sequence belongs to the PNP/UDP phosphorylase family. In terms of assembly, homohexamer; trimer of homodimers.

It catalyses the reaction a purine D-ribonucleoside + phosphate = a purine nucleobase + alpha-D-ribose 1-phosphate. It carries out the reaction a purine 2'-deoxy-D-ribonucleoside + phosphate = a purine nucleobase + 2-deoxy-alpha-D-ribose 1-phosphate. Catalyzes the reversible phosphorolytic breakdown of the N-glycosidic bond in the beta-(deoxy)ribonucleoside molecules, with the formation of the corresponding free purine bases and pentose-1-phosphate. This is Purine nucleoside phosphorylase DeoD-type from Tolumonas auensis (strain DSM 9187 / NBRC 110442 / TA 4).